The primary structure comprises 525 residues: Patatin-like protein 8 (525 aa).

A disordered region spans residues 1 to 50 (MNRRYEKPPPLSVSSKGKKKHFVNHTAPNTPGNYERTQTSPTLSTARSHE). A compositionally biased stretch (polar residues) spans 26-46 (TAPNTPGNYERTQTSPTLSTA). The region spanning 124 to 338 (LSIDGGGMRG…AMSNPTAAAI (215 aa)) is the PNPLA domain. A GXGXXG motif is present at residues 128–133 (GGGMRG). The active-site Nucleophile is serine 168.

It belongs to the patatin family. In terms of tissue distribution, specifically expressed in roots.

Functionally, possesses non-specific lipolytic acyl hydrolase (LAH) activity. Hydrolyzes phospholipids as well as galactolipids. May play a role in disease resistance. This chain is Patatin-like protein 8 (PLP8), found in Arabidopsis thaliana (Mouse-ear cress).